The primary structure comprises 292 residues: Release factor glutamine methyltransferase (292 aa).

S-adenosyl-L-methionine-binding positions include 126-130 (GTGTG), Asp157, Trp184, and Asn198. A substrate-binding site is contributed by 198 to 201 (NPPY).

It belongs to the protein N5-glutamine methyltransferase family. PrmC subfamily.

The catalysed reaction is L-glutaminyl-[peptide chain release factor] + S-adenosyl-L-methionine = N(5)-methyl-L-glutaminyl-[peptide chain release factor] + S-adenosyl-L-homocysteine + H(+). In terms of biological role, methylates the class 1 translation termination release factors RF1/PrfA and RF2/PrfB on the glutamine residue of the universally conserved GGQ motif. The polypeptide is Release factor glutamine methyltransferase (Haemophilus influenzae (strain ATCC 51907 / DSM 11121 / KW20 / Rd)).